Consider the following 80-residue polypeptide: Putative membrane protein insertion efficiency factor (80 aa).

It belongs to the UPF0161 family.

The protein resides in the cell membrane. Functionally, could be involved in insertion of integral membrane proteins into the membrane. The chain is Putative membrane protein insertion efficiency factor from Limosilactobacillus fermentum (strain NBRC 3956 / LMG 18251) (Lactobacillus fermentum).